Reading from the N-terminus, the 130-residue chain is MALTFPAELRYADSHEYAGPSDEGIKVGISAFAVDQLGDIVFVELPEVGASIEKGSSFGTVESVKAVEEMYAPVSGTVVAANQAVIDTPELLQNDPYQEGWLLKITPADPSQMEQLMDATSYSAKVEGGS.

The 83-residue stretch at 24 to 106 (GIKVGISAFA…YQEGWLLKIT (83 aa)) folds into the Lipoyl-binding domain. At lysine 65 the chain carries N6-lipoyllysine.

Belongs to the GcvH family. In terms of assembly, the glycine cleavage system is composed of four proteins: P, T, L and H. (R)-lipoate serves as cofactor.

In terms of biological role, the glycine cleavage system catalyzes the degradation of glycine. The H protein shuttles the methylamine group of glycine from the P protein to the T protein. The protein is Glycine cleavage system H protein of Synechococcus sp. (strain RCC307).